The following is a 98-amino-acid chain: Integration host factor subunit alpha (98 aa).

The interval 51-71 (NFDLRDKNERPGRNPKTGEDI) is disordered. The span at 53 to 69 (DLRDKNERPGRNPKTGE) shows a compositional bias: basic and acidic residues.

It belongs to the bacterial histone-like protein family. In terms of assembly, heterodimer of an alpha and a beta chain.

In terms of biological role, this protein is one of the two subunits of integration host factor, a specific DNA-binding protein that functions in genetic recombination as well as in transcriptional and translational control. In Vibrio campbellii (strain ATCC BAA-1116), this protein is Integration host factor subunit alpha.